We begin with the raw amino-acid sequence, 185 residues long: Ribosome-recycling factor (185 aa).

The interval 141–160 is disordered; the sequence is RIQKDGEAGEDEVGRAEKEL.

The protein belongs to the RRF family.

Its subcellular location is the cytoplasm. Its function is as follows. Responsible for the release of ribosomes from messenger RNA at the termination of protein biosynthesis. May increase the efficiency of translation by recycling ribosomes from one round of translation to another. This is Ribosome-recycling factor from Rhodococcus jostii (strain RHA1).